A 491-amino-acid chain; its full sequence is Acetyl-coenzyme A carboxylase carboxyl transferase subunit beta, chloroplastic (491 aa).

The segment at 28–56 (LGPIENTSESEDPNRNDMKKNSHSWGSRD) is disordered. A CoA carboxyltransferase N-terminal domain is found at 223–491 (LWVQCENCYG…FPLNKNSIEH (269 aa)). Zn(2+)-binding residues include cysteine 227, cysteine 230, cysteine 246, and cysteine 249. The C4-type zinc finger occupies 227-249 (CENCYGLNYKKILKSKMNLCEQC).

This sequence belongs to the AccD/PCCB family. As to quaternary structure, acetyl-CoA carboxylase is a heterohexamer composed of biotin carboxyl carrier protein, biotin carboxylase and 2 subunits each of ACCase subunit alpha and ACCase plastid-coded subunit beta (accD). The cofactor is Zn(2+).

The protein resides in the plastid. It localises to the chloroplast stroma. It catalyses the reaction N(6)-carboxybiotinyl-L-lysyl-[protein] + acetyl-CoA = N(6)-biotinyl-L-lysyl-[protein] + malonyl-CoA. Its pathway is lipid metabolism; malonyl-CoA biosynthesis; malonyl-CoA from acetyl-CoA: step 1/1. In terms of biological role, component of the acetyl coenzyme A carboxylase (ACC) complex. Biotin carboxylase (BC) catalyzes the carboxylation of biotin on its carrier protein (BCCP) and then the CO(2) group is transferred by the transcarboxylase to acetyl-CoA to form malonyl-CoA. This Daucus carota (Wild carrot) protein is Acetyl-coenzyme A carboxylase carboxyl transferase subunit beta, chloroplastic.